A 502-amino-acid polypeptide reads, in one-letter code: UPF0371 protein CLM_0396 (502 aa).

This sequence belongs to the UPF0371 family.

The sequence is that of UPF0371 protein CLM_0396 from Clostridium botulinum (strain Kyoto / Type A2).